The sequence spans 560 residues: Solute carrier family 22 member 6 (560 aa).

The Cytoplasmic portion of the chain corresponds to 1-15; that stretch reads MAFSDLLEQVGSTGR. Residues 16–36 traverse the membrane as a helical segment; sequence FQVLHVTLLSMPILMMASHNL. Topologically, residues 37-143 are extracellular; it reads LQNFVAAVPP…LVCDYRALKQ (107 aa). A helical membrane pass occupies residues 144 to 164; the sequence is MSQTTYMGGVLVGAIVFGGLS. Topologically, residues 165–170 are cytoplasmic; that stretch reads DRFGRR. The chain crosses the membrane as a helical span at residues 171-191; it reads VLLLISNLMMAIGGTCVAFST. The Extracellular portion of the chain corresponds to 192-201; the sequence is SFTMFCVFRV. A helical transmembrane segment spans residues 202–222; that stretch reads CCGMALSGLVLNSFSLIVEWI. Residues 223–228 lie on the Cytoplasmic side of the membrane; it reads PTRVRT. Residues 229 to 249 form a helical membrane-spanning segment; the sequence is VVGTGTGYCYTTGQLILAAVA. The Extracellular segment spans residues 250–256; it reads YCIRDWR. A helical transmembrane segment spans residues 257–277; it reads WLTLAVSLPFYVSFLYSWWFL. Residues 278–345 lie on the Cytoplasmic side of the membrane; it reads ESARWLVLTK…DLLRTSTMRT (68 aa). A helical membrane pass occupies residues 346–366; it reads ITICLSAVWFSTSFAYYGLSM. Over 367–374 the chain is Extracellular; sequence DLQKFGVS. A helical transmembrane segment spans residues 375–395; it reads IYLIQIIFGAVDIPAKIIVTI. Residues 396 to 406 lie on the Cytoplasmic side of the membrane; sequence CMSMLGRRPSQ. The chain crosses the membrane as a helical span at residues 407–427; sequence CGALVLAGIMILINLLVPSDL. The Extracellular portion of the chain corresponds to 428–433; that stretch reads QMLRTS. The chain crosses the membrane as a helical span at residues 434-454; that stretch reads LAVIGKGCLAASFNCCYLYAG. The Cytoplasmic portion of the chain corresponds to 455–465; the sequence is ELYPTVIRQSG. A helical transmembrane segment spans residues 466 to 486; that stretch reads MGWVSMMARFGAMVAPMVLLL. The Extracellular segment spans residues 487–491; that stretch reads GDDYP. Residues 492–512 form a helical membrane-spanning segment; sequence WIPGFIYGGAPIVSGIFAFFL. Over 513–560 the chain is Cytoplasmic; sequence PETLSQPLPDTIQDIDDRGLARTNSKRLPEKLDLAMKDPSCVLLKESV.

Belongs to the major facilitator (TC 2.A.1) superfamily. Organic cation transporter (TC 2.A.1.19) family. In terms of processing, glycosylated. Glycosylation is necessary for proper targeting of the transporter to the plasma membrane.

It is found in the cell membrane. Its subcellular location is the basolateral cell membrane. The protein resides in the basal cell membrane. Involved in the renal elimination of endogenous and exogenous organic anions. Functions as organic anion exchanger when the uptake of one molecule of organic anion is coupled with an efflux of one molecule of endogenous dicarboxylic acid (glutarate, ketoglutarate, etc). Mediates the sodium-independent uptake of p-aminohippurate (PAH), 2,3-dimercapto-1-propanesulfonic acid (DMPS), cidofovir, adefovir, 9-(2-phosphonylmethoxyethyl) guanine (PMEG), 9-(2-phosphonylmethoxyethyl) diaminopurine (PMEDAP), ochratoxin (OTA), acyclovir (ACV), 3'-azido-3-'deoxythymidine (AZT), cimetidine (CMD), 2,4-dichloro-phenoxyacetate (2,4-D), hippurate (HA), indoleacetate (IA), indoxyl sulfate (IS) and 3-carboxy-4-methyl-5-propyl-2-furanpropionate (CMPF) and edaravone sulfate. PAH uptake is inhibited by p-chloromercuribenzenesulphonate (PCMBS), diethyl pyrocarbonate (DEPC), indomethacin, sulindac, diclofenac, carprofen, okadaic acid, benzothiazolylcysteine (BTC), S-chlorotrifluoroethylcysteine (CTFC), cysteine S-conjugates S-dichlorovinylcysteine (DCVC), furosemide, steviol, phorbol 12-myristate 13-acetate (PMA), calcium ionophore A23187, benzylpenicillin, bumetamide, losartan, probenecid, phenol red, urate, glutarate and alpha-ketoglutarate. The sequence is that of Solute carrier family 22 member 6 (slc22a6) from Danio rerio (Zebrafish).